The sequence spans 124 residues: Ragulator complex protein LAMTOR3 (124 aa).

Residues 57 to 70 are required for interaction with LAMTOR2; sequence TDQGSKLGLSKNKS.

It belongs to the LAMTOR3 family. As to quaternary structure, part of the Ragulator complex composed of LAMTOR1, LAMTOR2, LAMTOR3, LAMTOR4 and LAMTOR5. LAMTOR4 and LAMTOR5 form a heterodimer that interacts, through LAMTOR1, with a LAMTOR2, LAMTOR3 heterodimer. Interacts with LAMTOR1 and LAMTOR2; the interaction is direct. The Ragulator complex interacts with both the mTORC1 complex and heterodimers constituted of the Rag GTPases RagA/RRAGA, RagB/RRAGB, RagC/RRAGC and RagD/RRAGD; regulated by amino acid availability. The Ragulator complex interacts with SLC38A9; the probable amino acid sensor. Component of the lysosomal folliculin complex (LFC), composed of FLCN, FNIP1 (or FNIP2), RagA/RRAGA or RagB/RRAGB GDP-bound, RagC/RRAGC or RagD/RRAGD GTP-bound, and Ragulator. Interacts with MAP2K1/MEK1 and MAPK2. Interacts with MORG1.

The protein resides in the late endosome membrane. Its function is as follows. As part of the Ragulator complex it is involved in amino acid sensing and activation of mTORC1, a signaling complex promoting cell growth in response to growth factors, energy levels, and amino acids. Activated by amino acids through a mechanism involving the lysosomal V-ATPase, the Ragulator plays a dual role for the small GTPases Rag (RagA/RRAGA, RagB/RRAGB, RagC/RRAGC and/or RagD/RRAGD): it (1) acts as a guanine nucleotide exchange factor (GEF), activating the small GTPases Rag and (2) mediates recruitment of Rag GTPases to the lysosome membrane. Activated Ragulator and Rag GTPases function as a scaffold recruiting mTORC1 to lysosomes where it is in turn activated. Adapter protein that enhances the efficiency of the MAP kinase cascade facilitating the activation of MAPK2. In Homo sapiens (Human), this protein is Ragulator complex protein LAMTOR3.